Reading from the N-terminus, the 182-residue chain is MAVEPDKPGVDDPGPGRRLGLDVGTVRIGVAVSDRDARLAMPVETVRRETGFKDRDKDDIDRLLDLIHEYDAVEVAVGLPRDLKGNGSSSVKHAKEIAFRIRRRLAKDDRMKEPPPVRMVDERLTTVVATSALRASGVSEKRGRSVIDQAAAVEILQSWLDARHFALNGHSPSNVGDEVREP.

This sequence belongs to the YqgF nuclease family.

It is found in the cytoplasm. In terms of biological role, could be a nuclease involved in processing of the 5'-end of pre-16S rRNA. In Corynebacterium aurimucosum (strain ATCC 700975 / DSM 44827 / CIP 107346 / CN-1) (Corynebacterium nigricans), this protein is Putative pre-16S rRNA nuclease.